A 460-amino-acid polypeptide reads, in one-letter code: Inactive ubiquitin carboxyl-terminal hydrolase MINDY-4B (460 aa).

The interval 41–76 (TNNSTPQNHEGNHTSADENEDGTGLSQPKGQGHLPS) is disordered.

Belongs to the MINDY deubiquitinase family. FAM188 subfamily.

In Homo sapiens (Human), this protein is Inactive ubiquitin carboxyl-terminal hydrolase MINDY-4B.